The chain runs to 629 residues: DNA ligase B (629 aa).

Lys-151 acts as the N6-AMP-lysine intermediate in catalysis. Residues 588–597 are compositionally biased toward polar residues; sequence LQKQHGTNTR. The interval 588–629 is disordered; that stretch reads LQKQHGTNTRNEQKGDVRRVDVKQDNGTTWLPEQDSNLRPND. Over residues 598–611 the composition is skewed to basic and acidic residues; that stretch reads NEQKGDVRRVDVKQ. Residues 612-629 show a composition bias toward polar residues; it reads DNGTTWLPEQDSNLRPND.

It belongs to the NAD-dependent DNA ligase family. LigB subfamily.

It carries out the reaction NAD(+) + (deoxyribonucleotide)n-3'-hydroxyl + 5'-phospho-(deoxyribonucleotide)m = (deoxyribonucleotide)n+m + AMP + beta-nicotinamide D-nucleotide.. Its function is as follows. Catalyzes the formation of phosphodiester linkages between 5'-phosphoryl and 3'-hydroxyl groups in double-stranded DNA using NAD as a coenzyme and as the energy source for the reaction. The protein is DNA ligase B of Chromohalobacter salexigens (strain ATCC BAA-138 / DSM 3043 / CIP 106854 / NCIMB 13768 / 1H11).